The sequence spans 150 residues: Nucleoside diphosphate kinase (150 aa).

Lys-10, Phe-58, Arg-86, Thr-92, Arg-103, and Asn-113 together coordinate ATP. His-116 (pros-phosphohistidine intermediate) is an active-site residue.

The protein belongs to the NDK family. As to quaternary structure, homohexamer. The cofactor is Mg(2+).

It carries out the reaction a 2'-deoxyribonucleoside 5'-diphosphate + ATP = a 2'-deoxyribonucleoside 5'-triphosphate + ADP. It catalyses the reaction a ribonucleoside 5'-diphosphate + ATP = a ribonucleoside 5'-triphosphate + ADP. Functionally, major role in the synthesis of nucleoside triphosphates other than ATP. The ATP gamma phosphate is transferred to the NDP beta phosphate via a ping-pong mechanism, using a phosphorylated active-site intermediate. This Drosophila yakuba (Fruit fly) protein is Nucleoside diphosphate kinase (awd).